The primary structure comprises 2725 residues: Teneurin-1 (2725 aa).

The interval 1 to 48 is disordered; sequence MEQTDCKPYQPLPKVKHEMDLAYTSSSDESEDGRKPRQSYNSRETLHE. Positions 1–318 constitute a Teneurin N-terminal domain; the sequence is MEQTDCKPYQ…KPYRCCNWKC (318 aa). At 1–324 the chain is on the cytoplasmic side; the sequence is MEQTDCKPYQ…NWKCTALSAT (324 aa). Residues 62 to 65 carry the Nuclear localization signal (NLS) motif; it reads RKRK. Residue S105 is modified to Phosphoserine. T109 carries the post-translational modification Phosphothreonine. S116 bears the Phosphoserine mark. A compositionally biased stretch (polar residues) spans 174–189; the sequence is AGSTQDVQSSPHNQFT. The tract at residues 174 to 241 is disordered; the sequence is AGSTQDVQSS…PAPPTSTQDS (68 aa). Positions 192-201 are enriched in pro residues; sequence PLPPPPPPPH. Positions 290-297 match the Required for interaction with SORBS1 (Ten-1 ICD form) motif; it reads PPPRPLPR. A helical membrane pass occupies residues 325-345; that stretch reads AITVTLALLLAYVIAVHLFGL. Residues 346–2725 are Extracellular-facing; the sequence is TWQLQPVEGE…FMRQSEIGRR (2380 aa). N433 is a glycosylation site (N-linked (GlcNAc...) asparagine). EGF-like domains lie at 528 to 559, 560 to 591, 592 to 624, 625 to 657, 658 to 691, 692 to 721, 722 to 753, and 761 to 796; these read IMDD…PDCA, RDSC…ECDV, PEEQ…EICE, EEDC…NCET, PLPV…SDCS, TELC…GPTC, EERS…DHCT, and VRDG…TGCN. 22 disulfides stabilise this stretch: C532-C542, C536-C547, C549-C558, C567-C578, C580-C589, C596-C607, C601-C612, C614-C623, C628-C639, C633-C644, C646-C655, C666-C679, C681-C690, C695-C705, C699-C710, C712-C721, C726-C736, C730-C741, C743-C752, C765-C775, C769-C784, and C786-C795. 2 N-linked (GlcNAc...) asparagine glycosylation sites follow: N905 and N1084. NHL repeat units lie at residues 1194 to 1219, 1292 to 1336, 1351 to 1402, 1414 to 1458, and 1481 to 1524; these read LFAP…VRRI, SHCG…NAVI, LSCD…IAGR, FLVS…VTTN, and CFSG…ISRN. Residues 1534–1553 form a YD 1 repeat; sequence YEIASPADQELYQFTVNGTH. N-linked (GlcNAc...) asparagine glycosylation is found at N1550 and N1567. 4 YD repeats span residues 1570–1590, 1608–1632, 1633–1654, and 1655–1675; these read YNSE…VHIR, YWLT…ALMT, YPGN…TVYE, and YDPE…SSFH. 5 N-linked (GlcNAc...) asparagine glycosylation sites follow: N1663, N1699, N1757, N1781, and N1842. YD repeat units follow at residues 1845–1864, 1865–1885, 1886–1904, 1905–1925, 1933–1949, 1950–1969, 1970–1989, 1992–2012, 2015–2035, 2085–2105, and 2113–2133; these read YSPS…EKME, YDQS…WSYT, YLEK…YIFE, YDQP…HSLQ, YRNI…FIQD, YSRD…RRVL, YKYT…TQVT, YEES…FICT, YRQT…EGLV, YDLN…FSAN, and YEIL…VGRM. N-linked (GlcNAc...) asparagine glycosylation occurs at N2145. 5 YD repeats span residues 2153–2173, 2174–2194, 2196–2216, 2228–2248, and 2250–2270; these read YDAD…WRYS, YDLN…LTPL, YDLR…DEDG, YNSN…TVQY, and YDGL…LQFF. N2285 is a glycosylation site (N-linked (GlcNAc...) asparagine). YD repeat units lie at residues 2296–2313 and 2314–2337; these read YDLQ…GEEY and YVAC…IKEI. S2580 carries the post-translational modification Phosphoserine. Residue N2602 is glycosylated (N-linked (GlcNAc...) asparagine).

The protein belongs to the tenascin family. Teneurin subfamily. Homodimer; disulfide-linked. Heterodimer with either TENM2 or TENM3. May also form heterodimer with TENM4. Ten-1 ICD interacts with SORBS1 (via third SH3 domain). Interacts with MBD1. Ten-1 ICD interacts with HINT1. In terms of processing, derives from the plasma membrane form by proteolytic processing. Further proteolytic cleavage may be generated. In terms of tissue distribution, expressed in fetal brain.

It localises to the cell membrane. It is found in the nucleus. The protein resides in the nucleus speckle. The protein localises to the nucleus matrix. Its subcellular location is the cytoplasm. It localises to the cytoskeleton. Functionally, involved in neural development, regulating the establishment of proper connectivity within the nervous system. May function as a cellular signal transducer. Its function is as follows. Plays a role in the regulation of neuroplasticity in the limbic system. Mediates a rapid reorganization of actin- and tubulin-based cytoskeleton elements with an increase in dendritic arborization and spine density formation of neurons in the hippocampus and amygdala. Induces BDNF transcription inhibition in neurons. Activates the mitogen-activated protein (MAP) kinase 2 (MEK2) and extracellular signal-regulated kinase (ERK) cascade. Also acts as a bioactive neuroprotective peptide on limbic neurons of the brain and regulates stress-induced behavior: attenuates alkalosis-associated necrotic cell death and the effects of corticotropin-releasing factor (CRF) on c-fos/FOS induction and on the reinstatement of cocaine seeking. In terms of biological role, induces gene transcription activation. The polypeptide is Teneurin-1 (TENM1) (Homo sapiens (Human)).